We begin with the raw amino-acid sequence, 328 residues long: Lipoyl synthase (328 aa).

[4Fe-4S] cluster contacts are provided by C56, C61, C67, C82, C86, C89, and S293. The Radical SAM core domain maps to 68-282 (WEDREATFLI…ERVGAELGFS (215 aa)).

This sequence belongs to the radical SAM superfamily. Lipoyl synthase family. [4Fe-4S] cluster serves as cofactor.

The protein resides in the cytoplasm. The catalysed reaction is [[Fe-S] cluster scaffold protein carrying a second [4Fe-4S](2+) cluster] + N(6)-octanoyl-L-lysyl-[protein] + 2 oxidized [2Fe-2S]-[ferredoxin] + 2 S-adenosyl-L-methionine + 4 H(+) = [[Fe-S] cluster scaffold protein] + N(6)-[(R)-dihydrolipoyl]-L-lysyl-[protein] + 4 Fe(3+) + 2 hydrogen sulfide + 2 5'-deoxyadenosine + 2 L-methionine + 2 reduced [2Fe-2S]-[ferredoxin]. Its pathway is protein modification; protein lipoylation via endogenous pathway; protein N(6)-(lipoyl)lysine from octanoyl-[acyl-carrier-protein]: step 2/2. Catalyzes the radical-mediated insertion of two sulfur atoms into the C-6 and C-8 positions of the octanoyl moiety bound to the lipoyl domains of lipoate-dependent enzymes, thereby converting the octanoylated domains into lipoylated derivatives. This is Lipoyl synthase from Frankia alni (strain DSM 45986 / CECT 9034 / ACN14a).